The following is a 509-amino-acid chain: ATP synthase subunit alpha (509 aa).

169-176 contributes to the ATP binding site; that stretch reads GDRQTGKT.

It belongs to the ATPase alpha/beta chains family. As to quaternary structure, F-type ATPases have 2 components, CF(1) - the catalytic core - and CF(0) - the membrane proton channel. CF(1) has five subunits: alpha(3), beta(3), gamma(1), delta(1), epsilon(1). CF(0) has four main subunits: a(1), b(1), b'(1) and c(9-12).

It localises to the cell inner membrane. The enzyme catalyses ATP + H2O + 4 H(+)(in) = ADP + phosphate + 5 H(+)(out). Its function is as follows. Produces ATP from ADP in the presence of a proton gradient across the membrane. The alpha chain is a regulatory subunit. This Erythrobacter litoralis (strain HTCC2594) protein is ATP synthase subunit alpha.